The chain runs to 248 residues: Enolase-phosphatase E1 (248 aa).

Aspartate 14 and glutamate 16 together coordinate Mg(2+). Residues 145–146 (SS) and lysine 179 each bind substrate. Aspartate 204 contributes to the Mg(2+) binding site.

It belongs to the HAD-like hydrolase superfamily. MasA/MtnC family. In terms of assembly, monomer. Mg(2+) is required as a cofactor.

The protein localises to the cytoplasm. Its subcellular location is the nucleus. It carries out the reaction 5-methylsulfanyl-2,3-dioxopentyl phosphate + H2O = 1,2-dihydroxy-5-(methylsulfanyl)pent-1-en-3-one + phosphate. It participates in amino-acid biosynthesis; L-methionine biosynthesis via salvage pathway; L-methionine from S-methyl-5-thio-alpha-D-ribose 1-phosphate: step 3/6. Its pathway is amino-acid biosynthesis; L-methionine biosynthesis via salvage pathway; L-methionine from S-methyl-5-thio-alpha-D-ribose 1-phosphate: step 4/6. In terms of biological role, bifunctional enzyme that catalyzes the enolization of 2,3-diketo-5-methylthiopentyl-1-phosphate (DK-MTP-1-P) into the intermediate 2-hydroxy-3-keto-5-methylthiopentenyl-1-phosphate (HK-MTPenyl-1-P), which is then dephosphorylated to form the acireductone 1,2-dihydroxy-3-keto-5-methylthiopentene (DHK-MTPene). The polypeptide is Enolase-phosphatase E1 (Caenorhabditis elegans).